We begin with the raw amino-acid sequence, 225 residues long: Cytidylate kinase (225 aa).

11–19 lines the ATP pocket; the sequence is GPSGAGKGT.

It belongs to the cytidylate kinase family. Type 1 subfamily.

Its subcellular location is the cytoplasm. The catalysed reaction is CMP + ATP = CDP + ADP. It catalyses the reaction dCMP + ATP = dCDP + ADP. The polypeptide is Cytidylate kinase (Mannheimia succiniciproducens (strain KCTC 0769BP / MBEL55E)).